The chain runs to 602 residues: Elongation factor 4 (602 aa).

Positions 7 to 189 constitute a tr-type G domain; sequence DKIRNFSIVA…AIVTRLPPPK (183 aa). GTP is bound by residues 19–24 and 136–139; these read DHGKST and NKVD.

It belongs to the TRAFAC class translation factor GTPase superfamily. Classic translation factor GTPase family. LepA subfamily.

It localises to the cell inner membrane. It carries out the reaction GTP + H2O = GDP + phosphate + H(+). Required for accurate and efficient protein synthesis under certain stress conditions. May act as a fidelity factor of the translation reaction, by catalyzing a one-codon backward translocation of tRNAs on improperly translocated ribosomes. Back-translocation proceeds from a post-translocation (POST) complex to a pre-translocation (PRE) complex, thus giving elongation factor G a second chance to translocate the tRNAs correctly. Binds to ribosomes in a GTP-dependent manner. The chain is Elongation factor 4 from Caulobacter vibrioides (strain NA1000 / CB15N) (Caulobacter crescentus).